Here is a 212-residue protein sequence, read N- to C-terminus: Uracil phosphoribosyltransferase (212 aa).

5-phospho-alpha-D-ribose 1-diphosphate-binding positions include R78, R103, and 130 to 138; that span reads DPMLATGGS. Residues I193 and 198-200 each bind uracil; that span reads GDA. D199 contacts 5-phospho-alpha-D-ribose 1-diphosphate.

The protein belongs to the UPRTase family. The cofactor is Mg(2+).

The enzyme catalyses UMP + diphosphate = 5-phospho-alpha-D-ribose 1-diphosphate + uracil. It participates in pyrimidine metabolism; UMP biosynthesis via salvage pathway; UMP from uracil: step 1/1. Allosterically activated by GTP. Its function is as follows. Catalyzes the conversion of uracil and 5-phospho-alpha-D-ribose 1-diphosphate (PRPP) to UMP and diphosphate. This Stutzerimonas stutzeri (strain A1501) (Pseudomonas stutzeri) protein is Uracil phosphoribosyltransferase.